A 134-amino-acid chain; its full sequence is Small ribosomal subunit protein uS9 (134 aa).

Positions 109-134 (DARRTEPHKPSKSSKGPRAKRQKSYR) are disordered. Basic residues predominate over residues 118 to 134 (PSKSSKGPRAKRQKSYR).

Belongs to the universal ribosomal protein uS9 family.

This chain is Small ribosomal subunit protein uS9, found in Methanococcus maripaludis (strain C5 / ATCC BAA-1333).